Reading from the N-terminus, the 244-residue chain is MFVPCAENVNDLDFSGFTLILPAVSIGNVGQLATDLTISSLSSSRHLIGYLHDASILPVVGNDAFARLGHEKGELNLSAEVYQSTEKRLVIVQQRAPISKGHYANYCQKLLAWIKRCSFKQVVLLSSISATDRVDAQLQGSPLRYMTTSVSQQLSSSFDKLSWVQLEKRPKFPDMTKESDELQFYLPGGGVTKRFFDRCEKEDVPLAVLMTFCSEGDNIADAVSLFLYLNDWLEITNKDTVGVN.

It belongs to the PSMG2 family. Forms a heterodimer with psmg1.

The protein resides in the nucleus. Its function is as follows. Chaperone protein which promotes assembly of the 20S proteasome as part of a heterodimer with psmg1. The chain is Proteasome assembly chaperone 2 (psmg2) from Nematostella vectensis (Starlet sea anemone).